A 316-amino-acid chain; its full sequence is Annexin D7 (316 aa).

An N-acetylalanine modification is found at Ala-2. Annexin repeat units follow at residues 11–82 (PLPE…LWTF), 83–154 (EPAE…PLVS), 166–237 (TLAR…AVIK), and 241–312 (YPEK…ALLG). 4 residues coordinate Ca(2+): Phe-24, Gly-26, Gly-28, and Glu-68. Ser-95 is modified (phosphoserine). Phosphothreonine is present on residues Thr-100 and Thr-112. Phosphotyrosine is present on Tyr-129. Ca(2+) contacts are provided by Ile-254 and Gly-258. Tyr-283 is modified (phosphotyrosine). Ser-288 carries the post-translational modification Phosphoserine. Residues Asp-298, Thr-299, and Glu-304 each coordinate Ca(2+).

It belongs to the annexin (TC 1.A.31.1) family. As to expression, expressed in flowers.

This is Annexin D7 (ANNAT7) from Arabidopsis thaliana (Mouse-ear cress).